An 85-amino-acid polypeptide reads, in one-letter code: HssA/B-like protein 59 (85 aa).

This sequence belongs to the hssA/B family.

This is HssA/B-like protein 59 (hssl59) from Dictyostelium discoideum (Social amoeba).